We begin with the raw amino-acid sequence, 530 residues long: Autoinducer-2 kinase (530 aa).

It belongs to the FGGY kinase family.

The protein resides in the cytoplasm. The enzyme catalyses (S)-4,5-dihydroxypentane-2,3-dione + ATP = (2S)-2-hydroxy-3,4-dioxopentyl phosphate + ADP + H(+). Functionally, catalyzes the phosphorylation of autoinducer-2 (AI-2) to phospho-AI-2, which subsequently inactivates the transcriptional regulator LsrR and leads to the transcription of the lsr operon. Phosphorylates the ring-open form of (S)-4,5-dihydroxypentane-2,3-dione (DPD), which is the precursor to all AI-2 signaling molecules, at the C5 position. This chain is Autoinducer-2 kinase, found in Escherichia coli O9:H4 (strain HS).